A 1100-amino-acid chain; its full sequence is Guanylate cyclase 2G (1100 aa).

A signal peptide spans 1 to 43 (MASRTRSESPLEPRLYAGAGSRADHPSLVLMLSVVMLVTCLEA). Topologically, residues 44–481 (AKLTVGFHAP…VAGMTVTVTA (438 aa)) are extracellular. N-linked (GlcNAc...) asparagine glycosylation is found at Asn55, Asn85, Asn94, Asn217, Asn225, Asn238, Asn418, Asn440, and Asn443. The chain crosses the membrane as a helical span at residues 482-502 (VIPTVTFLVLASAAAITGLML). Residues 503–1100 (WRLRGKVQSH…EEEAKVSEIL (598 aa)) lie on the Cytoplasmic side of the membrane. Residues 546–837 (SDTSTVKASA…EASPRGHVSI (292 aa)) enclose the Protein kinase domain. The 131-residue stretch at 901–1031 (TIFFSDIVGF…DTVNMASRME (131 aa)) folds into the Guanylate cyclase domain.

It belongs to the adenylyl cyclase class-4/guanylyl cyclase family. In terms of assembly, homooligomer. In vitro interacts with NPR1/GC-A. In terms of processing, N-glycosylated. Highly expressed in testis.

It localises to the cell membrane. The enzyme catalyses GTP = 3',5'-cyclic GMP + diphosphate. In Mus musculus (Mouse), this protein is Guanylate cyclase 2G (Gucy2g).